The chain runs to 144 residues: Large ribosomal subunit protein uL15 (144 aa).

The tract at residues 1-60 (MRLNSLRPAAGSRPDANRVGRGAGTGNGKTAGRGHKGQHSRSGGFTKVGFEGGQMPLQRR) is disordered. Residues 21 to 31 (RGAGTGNGKTA) show a composition bias toward gly residues.

This sequence belongs to the universal ribosomal protein uL15 family. In terms of assembly, part of the 50S ribosomal subunit.

In terms of biological role, binds to the 23S rRNA. This Alkalilimnicola ehrlichii (strain ATCC BAA-1101 / DSM 17681 / MLHE-1) protein is Large ribosomal subunit protein uL15.